Reading from the N-terminus, the 243-residue chain is Small ribosomal subunit protein uS2c (243 aa).

The protein belongs to the universal ribosomal protein uS2 family.

The protein resides in the plastid. Its subcellular location is the chloroplast. This Cyanidium caldarium (Red alga) protein is Small ribosomal subunit protein uS2c (rps2).